The following is a 256-amino-acid chain: Probable histidine-binding protein (256 aa).

The N-terminal stretch at 1 to 19 (MKKFLTAFLVAFTGLFLVA) is a signal peptide. Cys20 is lipidated: N-palmitoyl cysteine. Cys20 carries S-diacylglycerol cysteine lipidation.

It belongs to the bacterial solute-binding protein 3 family.

It localises to the cell membrane. Its function is as follows. Involved in histidine transport. The sequence is that of Probable histidine-binding protein (hisJ) from Campylobacter jejuni subsp. jejuni serotype O:2 (strain ATCC 700819 / NCTC 11168).